Consider the following 66-residue polypeptide: Large ribosomal subunit protein uL29 (66 aa).

The protein belongs to the universal ribosomal protein uL29 family.

This Helicobacter pylori (strain J99 / ATCC 700824) (Campylobacter pylori J99) protein is Large ribosomal subunit protein uL29 (rpmC).